We begin with the raw amino-acid sequence, 1186 residues long: Cytotoxicity-associated immunodominant antigen (1186 aa).

A compositionally biased stretch (basic and acidic residues) spans 630–649; it reads EKEVEKKLESKSGNKNKMEA. Residues 630–652 form a disordered region; sequence EKEVEKKLESKSGNKNKMEAKAQ.

In terms of biological role, may be necessary for the transcription, folding, export, or function of the cytotoxin. This chain is Cytotoxicity-associated immunodominant antigen (cagA), found in Helicobacter pylori (strain ATCC 700392 / 26695) (Campylobacter pylori).